Reading from the N-terminus, the 162-residue chain is Phosphopantetheine adenylyltransferase (162 aa).

A substrate-binding site is contributed by Thr-10. ATP is bound by residues 10-11 (TF) and His-18. 3 residues coordinate substrate: Lys-42, Met-74, and Arg-88. ATP is bound by residues 89–91 (GLR), Glu-99, and 124–130 (YAFLSST).

It belongs to the bacterial CoaD family. As to quaternary structure, homohexamer. Mg(2+) is required as a cofactor.

The protein localises to the cytoplasm. The enzyme catalyses (R)-4'-phosphopantetheine + ATP + H(+) = 3'-dephospho-CoA + diphosphate. The protein operates within cofactor biosynthesis; coenzyme A biosynthesis; CoA from (R)-pantothenate: step 4/5. Functionally, reversibly transfers an adenylyl group from ATP to 4'-phosphopantetheine, yielding dephospho-CoA (dPCoA) and pyrophosphate. In Aliivibrio fischeri (strain ATCC 700601 / ES114) (Vibrio fischeri), this protein is Phosphopantetheine adenylyltransferase.